The chain runs to 540 residues: Phosphoenolpyruvate carboxykinase (ATP) (540 aa).

Position 65 (R65) interacts with substrate. K87 carries the post-translational modification N6-acetyllysine. Substrate is bound by residues Y207 and K213. Residues K213, H232, and 248 to 256 (GLSGTGKTT) contribute to the ATP site. Positions 213 and 232 each coordinate Mn(2+). A Mn(2+)-binding site is contributed by D269. ATP-binding positions include E297, R333, 449 to 450 (RI), and T455. Substrate is bound at residue R333. N6-acetyllysine is present on K523.

The protein belongs to the phosphoenolpyruvate carboxykinase (ATP) family. In terms of assembly, monomer. Mn(2+) serves as cofactor.

It localises to the cytoplasm. It carries out the reaction oxaloacetate + ATP = phosphoenolpyruvate + ADP + CO2. Its pathway is carbohydrate biosynthesis; gluconeogenesis. Its function is as follows. Involved in the gluconeogenesis. Catalyzes the conversion of oxaloacetate (OAA) to phosphoenolpyruvate (PEP) through direct phosphoryl transfer between the nucleoside triphosphate and OAA. This Escherichia coli O157:H7 protein is Phosphoenolpyruvate carboxykinase (ATP).